Reading from the N-terminus, the 1405-residue chain is MKDLLKFLKQQSKTEEFNGIKIGLASPDLIRSWSFGEVKKPETINYRTFKPEREGLFCARIFGPVKDYECLCGKYKRLKHRGVICEKCGVEVTQTKVRRERMGHIELASPVAHIWFLKSLPSRIGLMLDMTLRDIERVLYFESFVVIEPGMTSLERGQMLTEETYLDALEEYGDEFEAKMGAEAVLELLRAIDLAKEIEQMREELPSINSETRRKKVTKRLKLMEAFYTSGNKPEWMILKVLPVLPPDLRPLVPLDGGRFATSDLNDLYRRVINRNNRLKRLLDLAAPDIIVRNEKRMLQESVDALLDNGRRGRAITGSNKRPLKSLADMIKGKQGRFRQNLLGKRVDYSGRSVITVGPTLRLHQCGLPKKMALELFKPFIYGKLEGRGLATTIKAAKKMVEREVAEVWDVLDEVIREHPVMLNRAPTLHRLGIQAFEPVLIEGKAIQLHPLVCAAYNADFDGDQMAVHVPLTLEAQLEARALMMSTNNILSPANGEPVITPSQDVVLGLYYTSRERINGRGEGMAFMSVAEVEKAYATGAAELHARVKVRITETIIGDTGERTEQRRIVDTTVGRALLSLILPAGLSFDLVNQNMGKKQISKLLNTCYRQLGLKDTVIFADQLMYTGFRFATISGASVGIDDMVIPDEKYTLVADAEAEVLEIQEQFQSGLVTAGERYNKVIDIWASANEKVSKAMMENLSTETVINRDGVEEKQASFNSIYMMADSGARGSAAQIRQLAGMRGLMAKPDGSIIETPITANFREGLNVLQYFISTHGARKGLADTALKTANSGYLTRRLVDVAQDLVVIEDDCGTHEGLTMKPLIEGGDVVEPLRERVLGRVVALDVFYPGTEDVLAPRNTLLDEAWCDKLEEYSIDEVIVRSVISCDTDFGVCAACYGRDLARGHIINHGEAIGVVAAQSIGEPGTQLTMRTFHIGGAASRASAENNVQVKNSGSLKLHNAKHVTNSDGKLVIVSRSSELAVIDELGREKERYKVPYGTVLEKLEEAAVEAGDVIANWDPHTHPIISEVAGSIKFVDMIDGVTMTRQTDELTGLSSIVILDVGQRGTAGKEMRPMIRLLGANGADLMIPGTEVPAQYFLPGSAIVNLEDNAQINVGDALARIPQESSKTRDITGGLPRVADLFEARKPKEPAILAEISGTISFGKETKGKRRLVITPADGGDHYEEMIPKWRNLNVFEGEKVERGEVIADGPEAAHDILRLRGIHNVANYIVNEVQDVYRLQGVKINDKHIEVIIRQMLRKCLITSAGDTDFLEGEQAEVSRVKIANRELIAQGKVPATFERELLGITKASLATESFISAASFQETTRVLTEAAVGGKSDQLRGLKENVIVGRLIPAGTGYAYHKTRNEARAKKNEPVVVNKITASEAEQNLADLLNLAGSQD.

Cys70, Cys72, Cys85, and Cys88 together coordinate Zn(2+). Asp460, Asp462, and Asp464 together coordinate Mg(2+). Zn(2+)-binding residues include Cys814, Cys888, Cys895, and Cys898.

The protein belongs to the RNA polymerase beta' chain family. As to quaternary structure, the RNAP catalytic core consists of 2 alpha, 1 beta, 1 beta' and 1 omega subunit. When a sigma factor is associated with the core the holoenzyme is formed, which can initiate transcription. Mg(2+) is required as a cofactor. It depends on Zn(2+) as a cofactor.

It carries out the reaction RNA(n) + a ribonucleoside 5'-triphosphate = RNA(n+1) + diphosphate. In terms of biological role, DNA-dependent RNA polymerase catalyzes the transcription of DNA into RNA using the four ribonucleoside triphosphates as substrates. The polypeptide is DNA-directed RNA polymerase subunit beta' (Shewanella baltica (strain OS223)).